We begin with the raw amino-acid sequence, 226 residues long: Leucyl/phenylalanyl-tRNA--protein transferase (226 aa).

The protein belongs to the L/F-transferase family.

Its subcellular location is the cytoplasm. It carries out the reaction N-terminal L-lysyl-[protein] + L-leucyl-tRNA(Leu) = N-terminal L-leucyl-L-lysyl-[protein] + tRNA(Leu) + H(+). The catalysed reaction is N-terminal L-arginyl-[protein] + L-leucyl-tRNA(Leu) = N-terminal L-leucyl-L-arginyl-[protein] + tRNA(Leu) + H(+). It catalyses the reaction L-phenylalanyl-tRNA(Phe) + an N-terminal L-alpha-aminoacyl-[protein] = an N-terminal L-phenylalanyl-L-alpha-aminoacyl-[protein] + tRNA(Phe). Functionally, functions in the N-end rule pathway of protein degradation where it conjugates Leu, Phe and, less efficiently, Met from aminoacyl-tRNAs to the N-termini of proteins containing an N-terminal arginine or lysine. In Azotobacter vinelandii (strain DJ / ATCC BAA-1303), this protein is Leucyl/phenylalanyl-tRNA--protein transferase.